The following is a 320-amino-acid chain: Baseplate tail-tube junction protein gp54 (320 aa).

Homohexamer. The tube second annulus is composed of a gp54 hexameric ring. Interacts with the tail tube protein gp19. Interacts with the first layer of sheath proteins gp18. Part of the baseplate macromolecular complex which consists of gp5, gp5.4, gp27 (central spike complex); gp6, gp25, gp53 (inner baseplate); gp7, gp8 (intermediate baseplate); gp9, gp10, gp11, gp12 (peripheral); gp48 and gp54 (proximal region of the tail tube).

Its subcellular location is the virion. In terms of biological role, baseplate protein that forms, together with gp48, the baseplate-tail tube junction. The tail tube first 2 annuli are formed by gp48 and gp54, which are in continuation of the spike complex. Involved in the tail assembly. Morphogenesis of the baseplate is completed by association of gp48 and gp54, which bind the upper part of the baseplate dome to form the platform for polymerization of the tail tube. This chain is Baseplate tail-tube junction protein gp54 (54), found in Escherichia coli (Bacteriophage T4).